Consider the following 302-residue polypeptide: RELT-like protein 2 (302 aa).

The helical transmembrane segment at 15-35 threads the bilayer; that stretch reads LYMLFLLVLVFFLMGLVGFMI. Disordered regions lie at residues 47-68, 135-164, 177-212, and 247-302; these read RTSR…DDVN, CSRS…TTVF, RYGL…GQPR, and VPCT…AGGM. At serine 52 the chain carries Phosphoserine. 2 stretches are compositionally biased toward basic and acidic residues: residues 148–158 and 177–188; these read RSKEGKGRPRP and RYGLHEHRDGSP. The segment covering 277-294 has biased composition (polar residues); sequence QEANGQPTKLDTSGQQDS.

It belongs to the RELT family. In terms of assembly, interacts with RELT, RELL1, OXSR1, PLSCR1 and TRAF2.

The protein localises to the cell membrane. Induces activation of MAPK14/p38 cascade, when overexpressed. Induces apoptosis, when overexpressed. In Rattus norvegicus (Rat), this protein is RELT-like protein 2 (Rell2).